A 479-amino-acid chain; its full sequence is Probable glycine dehydrogenase (decarboxylating) subunit 2 (479 aa).

Lys265 carries the post-translational modification N6-(pyridoxal phosphate)lysine.

Belongs to the GcvP family. C-terminal subunit subfamily. In terms of assembly, the glycine cleavage system is composed of four proteins: P, T, L and H. In this organism, the P 'protein' is a heterodimer of two subunits. Pyridoxal 5'-phosphate is required as a cofactor.

It carries out the reaction N(6)-[(R)-lipoyl]-L-lysyl-[glycine-cleavage complex H protein] + glycine + H(+) = N(6)-[(R)-S(8)-aminomethyldihydrolipoyl]-L-lysyl-[glycine-cleavage complex H protein] + CO2. Its function is as follows. The glycine cleavage system catalyzes the degradation of glycine. The P protein binds the alpha-amino group of glycine through its pyridoxal phosphate cofactor; CO(2) is released and the remaining methylamine moiety is then transferred to the lipoamide cofactor of the H protein. This Pseudothermotoga lettingae (strain ATCC BAA-301 / DSM 14385 / NBRC 107922 / TMO) (Thermotoga lettingae) protein is Probable glycine dehydrogenase (decarboxylating) subunit 2.